Reading from the N-terminus, the 242-residue chain is Demethylmenaquinone methyltransferase (242 aa).

Residues T74 and D93 each contribute to the S-adenosyl-L-methionine site.

The protein belongs to the class I-like SAM-binding methyltransferase superfamily. MenG/UbiE family.

The catalysed reaction is a 2-demethylmenaquinol + S-adenosyl-L-methionine = a menaquinol + S-adenosyl-L-homocysteine + H(+). Its pathway is quinol/quinone metabolism; menaquinone biosynthesis; menaquinol from 1,4-dihydroxy-2-naphthoate: step 2/2. Its function is as follows. Methyltransferase required for the conversion of demethylmenaquinol (DMKH2) to menaquinol (MKH2). The protein is Demethylmenaquinone methyltransferase of Chlorobaculum tepidum (strain ATCC 49652 / DSM 12025 / NBRC 103806 / TLS) (Chlorobium tepidum).